We begin with the raw amino-acid sequence, 588 residues long: Aspartate--tRNA ligase (588 aa).

An L-aspartate-binding site is contributed by E177. Residues 201 to 204 are aspartate; sequence QLFK. R223 is an L-aspartate binding site. ATP contacts are provided by residues 223–225 and Q232; that span reads RDE. H451 is an L-aspartate binding site. An ATP-binding site is contributed by E485. R492 contributes to the L-aspartate binding site. 537-540 is an ATP binding site; it reads GLDR.

This sequence belongs to the class-II aminoacyl-tRNA synthetase family. Type 1 subfamily. As to quaternary structure, homodimer.

Its subcellular location is the cytoplasm. It carries out the reaction tRNA(Asp) + L-aspartate + ATP = L-aspartyl-tRNA(Asp) + AMP + diphosphate. Its function is as follows. Catalyzes the attachment of L-aspartate to tRNA(Asp) in a two-step reaction: L-aspartate is first activated by ATP to form Asp-AMP and then transferred to the acceptor end of tRNA(Asp). The protein is Aspartate--tRNA ligase of Staphylococcus carnosus (strain TM300).